The sequence spans 719 residues: Probable phosphatidylinositol phosphate kinase DDB_G0267588 (719 aa).

Positions 47-261 (VFSPIPPPPS…SDSPNRVRLN (215 aa)) are disordered. Low complexity-rich tracts occupy residues 57–77 (TTDN…TDNT) and 87–104 (IENN…PNSI). The span at 107–129 (ANKKDSIELEEDKEHSIKRKDGS) shows a compositional bias: basic and acidic residues. Polar residues predominate over residues 172–184 (FDATNDNHNPQEV). Residues 199 to 217 (TTTTTTTTTTTTSTNSTSN) show a composition bias toward low complexity. Polar residues-rich tracts occupy residues 218–228 (KLPNNGDNTVS) and 248–261 (ASGS…VRLN). Phosphothreonine is present on Thr-262. The 403-residue stretch at 316–718 (NAVGKSMGTE…RFQEFLSTII (403 aa)) folds into the PIPK domain. Residues 579–638 (RENEPPSPSLLRSTLEDSSDFESPSMEQSSAGQQQQQRGSGNYDNSGAGRDSTTGGAAPK) are disordered. Residues 606 to 619 (QSSAGQQQQQRGSG) are compositionally biased toward low complexity.

In terms of processing, phosphorylated at Thr-262 by pkgB.

Functionally, may be involved in signaling events that underlie chemotaxis via the chemoattractant-mediated pkgB phosphorylation. The polypeptide is Probable phosphatidylinositol phosphate kinase DDB_G0267588 (Dictyostelium discoideum (Social amoeba)).